Consider the following 124-residue polypeptide: uncharacterized protein (124 aa).

It localises to the cytoplasm. The protein resides in the nucleus. This is an uncharacterized protein from Schizosaccharomyces pombe (strain 972 / ATCC 24843) (Fission yeast).